The sequence spans 447 residues: MTAHEVNFDGLVGLTHHYAGLSFGNEASTRHRFQVSNPRLAVKQGLLKMKALADAGFPQAVIPPHERPFIPALRQLGFTGSDEQILDKVARQAPRWLSSVSSASPMWVANAATVCPSADALDGKVHLTVANLNNKFHRALEAPVTEALLRAIFRDESQFSVHSALPQVALLGDEGAANHNRLGGEYGSAGVQLFVYGREEENEIRPARYPARQSREASEAVARLNQVNPQQVIFAQQNPEVIDQGVFHNDVIAVSNRQVLFCHEAAFARQKVLINQLRTRVDGFMAIEVPAGEVSVSDAVAPYLFNSQLLSRDDGSMLLVLPRECQDHAGVWRYLNKLVAEDNPISAMQVFDLRESMANGGGPACLRLRVVLTEEERRAVNPAVMMNDALFTALNAWADRYYRDRLTAADLADPLLLREGREALDVLTRLLDLGSVYPFQQTGAADG.

Substrate-binding positions include alanine 19–serine 28, asparagine 110, and histidine 137–arginine 138. Glutamate 174 is an active-site residue. Residue arginine 212 coordinates substrate. Histidine 248 is an active-site residue. The substrate site is built by aspartate 250 and asparagine 359. Cysteine 365 acts as the Nucleophile in catalysis.

This sequence belongs to the succinylarginine dihydrolase family. As to quaternary structure, homodimer.

The catalysed reaction is N(2)-succinyl-L-arginine + 2 H2O + 2 H(+) = N(2)-succinyl-L-ornithine + 2 NH4(+) + CO2. It participates in amino-acid degradation; L-arginine degradation via AST pathway; L-glutamate and succinate from L-arginine: step 2/5. Its function is as follows. Catalyzes the hydrolysis of N(2)-succinylarginine into N(2)-succinylornithine, ammonia and CO(2). The polypeptide is N-succinylarginine dihydrolase (Salmonella paratyphi A (strain ATCC 9150 / SARB42)).